Reading from the N-terminus, the 120-residue chain is LOB domain-containing protein 8 (120 aa).

In terms of domain architecture, LOB spans Arg-8–Ile-109.

It belongs to the LOB domain-containing protein family.

The protein is LOB domain-containing protein 8 (LBD8) of Arabidopsis thaliana (Mouse-ear cress).